Reading from the N-terminus, the 203-residue chain is Hypoxanthine-guanine phosphoribosyltransferase (203 aa).

Lys66 and Gly67 together coordinate diphosphate. Mg(2+) contacts are provided by Glu122 and Asp123. The active-site Proton acceptor is the Asp126. Residues Lys154, 175–176 (FV), and Asp182 contribute to the GMP site. Residue Arg188 coordinates diphosphate.

It belongs to the purine/pyrimidine phosphoribosyltransferase family. The cofactor is Mg(2+).

It localises to the cytoplasm. The catalysed reaction is IMP + diphosphate = hypoxanthine + 5-phospho-alpha-D-ribose 1-diphosphate. The enzyme catalyses GMP + diphosphate = guanine + 5-phospho-alpha-D-ribose 1-diphosphate. It functions in the pathway purine metabolism; IMP biosynthesis via salvage pathway; IMP from hypoxanthine: step 1/1. It participates in purine metabolism; GMP biosynthesis via salvage pathway; GMP from guanine: step 1/1. Its function is as follows. Purine salvage pathway enzyme that catalyzes the transfer of the ribosyl-5-phosphate group from 5-phospho-alpha-D-ribose 1-diphosphate (PRPP) to the N9 position of the 6-oxopurines hypoxanthine and guanine to form the corresponding ribonucleotides IMP (inosine 5'-monophosphate) and GMP (guanosine 5'-monophosphate), with the release of PPi. The polypeptide is Hypoxanthine-guanine phosphoribosyltransferase (hpt) (Mycobacterium avium).